A 579-amino-acid polypeptide reads, in one-letter code: MISESQGGLMSAFTTPPKFSGFIRRLVEEGYVNAQNMQQALEKAKKFKQDIVPYLIDNFSISPLTIAEIISLEFGEPLLDLGVFDPALFLKDKIDEKLIQKYRIMPLVHRGHVLYVATSNPTNIEAMDAIRFNSKLKVEPIIVEHDKLERLLSEHFVEETHFNFDTEELDLDVEVDPHTTDDDDEDDKLKDEAPIVKYINKLLIDAIRMSASDLHFEPYEKSYRVRYRVDGVLRLIATPPLQLATRLASRLKVMSQMDISEKRVPQDGRIKLKMSKSKTIDFRVNSLPTLFGEKIVLRILDPASAMLGIDALGYEPEQKALFMEALNKPQGMLLITGPTGSGKTVSLYTGLNILNTEHANISTAEDPVEINLEGVNQVNVNPKVGLTFAAALRSFLRQDPDIIMVGEIRDLETAEIAIKAAQTGHLVMSTLHTNNAAETLTRLRNMGVASFNIATSVNLVIAQRLARRLCSQCKRPIQVPERSLLEMGFTPEDLAQPEFQIFEPVGCHDCREGYKGRVGIYEVMKITPEISKIIMEDGNALEIAATAETLGFNNLRRSGLKKVMQGVTSLQEINRVTSE.

340-345 (GSGKTV) contacts ATP. Positions 470, 473, 507, and 510 each coordinate Zn(2+).

The protein belongs to the GSP E family. In terms of assembly, interacts with CpiA.

Its subcellular location is the cytoplasm. Inhibited by the inhibitory protein CpiA. ATPase component of the type IV pilus (T4P). Acts as a molecular motor to provide the energy that is required for biogenesis of the pilus and the extrusion of substrates generated in the cytoplasm. PilB is required for optimal T4P extension and, consequently, efficient natural transformation. May promote processive T4P extension. In Acinetobacter baylyi (strain ATCC 33305 / BD413 / ADP1), this protein is Type IV pilus assembly ATPase PilB.